Consider the following 359-residue polypeptide: Peptide chain release factor 1 (359 aa).

N5-methylglutamine is present on Q236.

This sequence belongs to the prokaryotic/mitochondrial release factor family. Post-translationally, methylated by PrmC. Methylation increases the termination efficiency of RF1.

The protein resides in the cytoplasm. Its function is as follows. Peptide chain release factor 1 directs the termination of translation in response to the peptide chain termination codons UAG and UAA. The chain is Peptide chain release factor 1 from Streptococcus pneumoniae serotype 19F (strain G54).